The chain runs to 307 residues: Lactamase-like protein vrtG (307 aa).

Zn(2+)-binding residues include H97, H99, D101, and H102. Catalysis depends on D101, which acts as the Proton donor/acceptor.

It belongs to the metallo-beta-lactamase superfamily. Zn(2+) serves as cofactor.

It functions in the pathway secondary metabolite biosynthesis; terpenoid biosynthesis. Its function is as follows. Lactamase-like protein; part of the gene cluster that mediates the biosynthesis of viridicatumtoxin, a tetracycline-like fungal meroterpenoid with a unique, fused spirobicyclic ring system. The first step of the pathway is the production of the malonamoyl-CoA starter unit for the polyketide synthase vrtA. The aldolase vrtJ may be involved in the synthesis of the malonamate substrate for malonamoyl-CoA synthetase vrtB. The polyketide synthase vrtA then may utilize the malonamoyl-CoA starter unit, followed by sequential condensation of eight malonyl-CoA units to form the polyketide backbone. The cyclization of the last ring could be mediated by the lactamase-like protein vrtG. The proposed post-PKS tailoring steps are a hydroxylation at C5 catalyzed the cytochrome P450 monooxygenase vrtE, a hydroxylation at C12a catalyzed by VrtH and/or VrtI, and an O-methylation by the O-methyltransferase vrtF. VrtC is then proposed to catalyze the transfer of a geranyl group synthesized by vrtD to the aromatic C ring of the tetracyclic polyketide intermediate of viridicatumtoxin to yield previridicatumtoxin. Finally, the cytochrome P450 monooxygenase vrtK catalyzes the spirocyclization of the geranyl moiety of previridicatumtoxin to afford viridicatumtoxin. The chain is Lactamase-like protein vrtG from Penicillium aethiopicum.